The sequence spans 229 residues: Large ribosomal subunit protein uL1 (229 aa).

Belongs to the universal ribosomal protein uL1 family. In terms of assembly, part of the 50S ribosomal subunit.

Binds directly to 23S rRNA. The L1 stalk is quite mobile in the ribosome, and is involved in E site tRNA release. Functionally, protein L1 is also a translational repressor protein, it controls the translation of the L11 operon by binding to its mRNA. The polypeptide is Large ribosomal subunit protein uL1 (Clostridium botulinum (strain 657 / Type Ba4)).